A 540-amino-acid polypeptide reads, in one-letter code: 2,3-bisphosphoglycerate-independent phosphoglycerate mutase (540 aa).

Asp-13 and Ser-63 together coordinate Mn(2+). The active-site Phosphoserine intermediate is Ser-63. Residues His-124, 154-155 (RD), Arg-186, Arg-192, 262-265 (RPDR), and Lys-356 contribute to the substrate site. Mn(2+) is bound by residues Asp-423, His-427, Asp-464, His-465, and His-483.

The protein belongs to the BPG-independent phosphoglycerate mutase family. In terms of assembly, monomer. Mn(2+) serves as cofactor.

The catalysed reaction is (2R)-2-phosphoglycerate = (2R)-3-phosphoglycerate. The protein operates within carbohydrate degradation; glycolysis; pyruvate from D-glyceraldehyde 3-phosphate: step 3/5. Catalyzes the interconversion of 2-phosphoglycerate and 3-phosphoglycerate. This Chloroflexus aurantiacus (strain ATCC 29366 / DSM 635 / J-10-fl) protein is 2,3-bisphosphoglycerate-independent phosphoglycerate mutase.